Consider the following 356-residue polypeptide: MQTRKIVRAAAVQAASPNYDLATGVDKTIELARQARDEGCDLIVFGETWLPGYPFHVWLGAPAWSLKYSARYYANSLSLDSAEFQRIAQAARTLGIFIALGYSERSGGSLYLGQCLIDDKGQMLWSRRKLKPTHVERTVFGEGYARDLIVSDTELGRVGALCCWEHLSPLSKYALYSQHEAIHIAAWPSFSLYSEQAHALSAKVNMAASQIYSVEGQCFTIAASSVVTQETLDMLEVGEHNASLLKVGGGSSMIFAPDGRTLAPYLPHDAEGLIIADLNMEEIAFAKAINDPVGHYSKPEATRLVLDLGHREPMTRVHSKSVIQEEAPEPHVQSTAAPVAVSQTQDSDTLLVQEPS.

The region spanning 7 to 280 is the CN hydrolase domain; that stretch reads VRAAAVQAAS…EGLIIADLNM (274 aa). Glutamate 47 acts as the Proton acceptor in catalysis. Catalysis depends on lysine 129, which acts as the Proton donor. Catalysis depends on cysteine 163, which acts as the Nucleophile. Positions 324 to 356 are disordered; the sequence is QEEAPEPHVQSTAAPVAVSQTQDSDTLLVQEPS. Residues 332 to 356 are compositionally biased toward polar residues; that stretch reads VQSTAAPVAVSQTQDSDTLLVQEPS.

Belongs to the carbon-nitrogen hydrolase superfamily. Nitrilase family. In terms of assembly, homohexamer.

The catalysed reaction is a nitrile + 2 H2O = a carboxylate + NH4(+). In terms of biological role, nitrilase that acts mostly on arylacetonitriles. The sequence is that of Nitrilase, arylacetone-specific from Alcaligenes faecalis.